Here is a 550-residue protein sequence, read N- to C-terminus: Chaperonin GroEL (550 aa).

Residues 29-32, Lys50, 86-90, Gly417, and Asp499 contribute to the ATP site; these read TAGP and DGTTT.

It belongs to the chaperonin (HSP60) family. Forms a cylinder of 14 subunits composed of two heptameric rings stacked back-to-back. Interacts with the co-chaperonin GroES.

Its subcellular location is the cytoplasm. It catalyses the reaction ATP + H2O + a folded polypeptide = ADP + phosphate + an unfolded polypeptide.. Together with its co-chaperonin GroES, plays an essential role in assisting protein folding. The GroEL-GroES system forms a nano-cage that allows encapsulation of the non-native substrate proteins and provides a physical environment optimized to promote and accelerate protein folding. In Ehrlichia chaffeensis, this protein is Chaperonin GroEL.